The chain runs to 687 residues: Glycine--tRNA ligase beta subunit (687 aa).

It belongs to the class-II aminoacyl-tRNA synthetase family. Tetramer of two alpha and two beta subunits.

Its subcellular location is the cytoplasm. It catalyses the reaction tRNA(Gly) + glycine + ATP = glycyl-tRNA(Gly) + AMP + diphosphate. The polypeptide is Glycine--tRNA ligase beta subunit (Lactobacillus helveticus (strain DPC 4571)).